The primary structure comprises 280 residues: MKTNYEIRYAAHPEDAKSYDTARIRRDFLIEKIFVPNEVNMVYSMYDRMVVGGALPVGEVLTLEAIDPLKAPFFLTRREMGIYNVGGPGVVKAGDAVFELDYKEALYLGSGDRVVTFESKDASNPAKFYFNSLTAHRNYPDRKVTKADAVVAEMGSLEGSNHRNINKMLVNQVLPTCQLQMGMTELAPGSVWNTMPAHVHSRRMEAYFYFEIPEEHAICHFMGEVDETRHVWMKGDQAVLSPEWSIHSAAATHNYTFIWGMGGENLDYGDQDFSLITDLK.

Residues His198, His200, Glu205, and His247 each contribute to the Zn(2+) site.

This sequence belongs to the KduI family. Zn(2+) is required as a cofactor.

The enzyme catalyses 5-dehydro-4-deoxy-D-glucuronate = 3-deoxy-D-glycero-2,5-hexodiulosonate. It functions in the pathway glycan metabolism; pectin degradation; 2-dehydro-3-deoxy-D-gluconate from pectin: step 4/5. In terms of biological role, catalyzes the isomerization of 5-dehydro-4-deoxy-D-glucuronate to 3-deoxy-D-glycero-2,5-hexodiulosonate. This Bacteroides thetaiotaomicron (strain ATCC 29148 / DSM 2079 / JCM 5827 / CCUG 10774 / NCTC 10582 / VPI-5482 / E50) protein is 4-deoxy-L-threo-5-hexosulose-uronate ketol-isomerase 1 (kduI1).